We begin with the raw amino-acid sequence, 452 residues long: UPF0210 protein Csac_1314 (452 aa).

This sequence belongs to the UPF0210 family. In terms of assembly, homodimer.

In Caldicellulosiruptor saccharolyticus (strain ATCC 43494 / DSM 8903 / Tp8T 6331), this protein is UPF0210 protein Csac_1314.